We begin with the raw amino-acid sequence, 208 residues long: Thymidylate kinase (208 aa).

ATP is bound at residue 10-17 (GPDGSGKT).

It belongs to the thymidylate kinase family.

The catalysed reaction is dTMP + ATP = dTDP + ADP. Phosphorylation of dTMP to form dTDP in both de novo and salvage pathways of dTTP synthesis. This is Thymidylate kinase from Listeria welshimeri serovar 6b (strain ATCC 35897 / DSM 20650 / CCUG 15529 / CIP 8149 / NCTC 11857 / SLCC 5334 / V8).